A 324-amino-acid chain; its full sequence is THUMP domain-containing protein 1 homolog (324 aa).

Disordered regions lie at residues 1-24 (MEPASKKSKMGKNVKFNNNKKKYF) and 67-104 (SEKPENEPEKKQPEEGAGGDAGEDDPKPAAGGTSDDDD). Basic and acidic residues predominate over residues 68–80 (EKPENEPEKKQPE). Phosphothreonine is present on Thr99. Residue Ser100 is modified to Phosphoserine. In terms of domain architecture, THUMP spans 154 to 260 (DIATTGKSMS…RGWCLLSVID (107 aa)). The segment at 275–324 (NPSDKKSSGEGDSKSETSEVANGNDKEQAESSEESKSNDDENKDSTENDK) is disordered. Composition is skewed to basic and acidic residues over residues 277-291 (SDKKSSGEGDSKSET) and 298-324 (NDKEQAESSEESKSNDDENKDSTENDK).

The protein belongs to the THUMPD1 family.

The protein is THUMP domain-containing protein 1 homolog of Drosophila melanogaster (Fruit fly).